The chain runs to 223 residues: Endonuclease V (223 aa).

Aspartate 45 and aspartate 113 together coordinate Mg(2+).

The protein belongs to the endonuclease V family. It depends on Mg(2+) as a cofactor.

The protein resides in the cytoplasm. It catalyses the reaction Endonucleolytic cleavage at apurinic or apyrimidinic sites to products with a 5'-phosphate.. In terms of biological role, DNA repair enzyme involved in the repair of deaminated bases. Selectively cleaves double-stranded DNA at the second phosphodiester bond 3' to a deoxyinosine leaving behind the intact lesion on the nicked DNA. This Dehalococcoides mccartyi (strain ATCC BAA-2100 / JCM 16839 / KCTC 5957 / BAV1) protein is Endonuclease V.